The primary structure comprises 459 residues: Transcription factor mlcR (459 aa).

Positions 21–53 (CDRCHAQKLKCTGSNANLVRAQCQRCQQAGLRC) form a DNA-binding region, zn(2)-C6 fungal-type. Disordered stretches follow at residues 64–84 (LHKE…PMTA) and 135–170 (DPES…DFEG). Low complexity predominate over residues 69-78 (AAGTTRATET).

It localises to the nucleus. Functionally, transcription factor that regulates the gene cluster that mediates the biosynthesis of compactin, also known as mevastatin or ML-236B, and which acts as a potent competitive inhibitor of HMG-CoA reductase. Binds to the consensus-binding motif 5'-WCGG-N(6)-TCGG-3' of target genes. In Penicillium citrinum, this protein is Transcription factor mlcR.